The primary structure comprises 135 residues: Holo-[acyl-carrier-protein] synthase (135 aa).

Residues Asp8 and Glu58 each coordinate Mg(2+).

This sequence belongs to the P-Pant transferase superfamily. AcpS family. Mg(2+) serves as cofactor.

The protein localises to the cytoplasm. The enzyme catalyses apo-[ACP] + CoA = holo-[ACP] + adenosine 3',5'-bisphosphate + H(+). In terms of biological role, transfers the 4'-phosphopantetheine moiety from coenzyme A to a Ser of acyl-carrier-protein. The sequence is that of Holo-[acyl-carrier-protein] synthase from Ligilactobacillus salivarius (strain UCC118) (Lactobacillus salivarius).